The primary structure comprises 52 residues: UPF0391 membrane protein Avin_10980 (52 aa).

The next 2 membrane-spanning stretches (helical) occupy residues 4–24 (WSIIFLVVAIIAGLLGFGGIA) and 29–49 (GIAKILFALFLILFVVSLLFG).

It belongs to the UPF0391 family.

Its subcellular location is the cell membrane. This Azotobacter vinelandii (strain DJ / ATCC BAA-1303) protein is UPF0391 membrane protein Avin_10980.